The chain runs to 546 residues: Probable malate:quinone oxidoreductase (546 aa).

Belongs to the MQO family. FAD is required as a cofactor.

The catalysed reaction is (S)-malate + a quinone = a quinol + oxaloacetate. It functions in the pathway carbohydrate metabolism; tricarboxylic acid cycle; oxaloacetate from (S)-malate (quinone route): step 1/1. The polypeptide is Probable malate:quinone oxidoreductase (Acinetobacter baumannii (strain AB0057)).